A 29-amino-acid polypeptide reads, in one-letter code: Cyclotide mela-3 (29 aa).

The segment at residues 1–29 (GKPICGETCFKGKCYTPGCTCSYPICKKD) is a cross-link (cyclopeptide (Gly-Asp)). 3 cysteine pairs are disulfide-bonded: cysteine 5–cysteine 19, cysteine 9–cysteine 21, and cysteine 14–cysteine 26.

This is a cyclic peptide. In terms of processing, contains 3 disulfide bonds.

Functionally, probably participates in a plant defense mechanism (Potential). Binds to and induces leakage in phospholipd membranes, particularly ones containing 1-palmitoyl-2-oleophosphatidylethanolamine (POPE). In vitro, displays cytotoxicity against cultured cells. Not active against Gram-negative bacterium E.coli ATCC 25922 or Gram-positive bacterium S.aureus ATCC 25923 up to a concentration of 64 uM. This Melicytus latifolius (Norfolk Island mahoe) protein is Cyclotide mela-3.